Reading from the N-terminus, the 443-residue chain is 23S rRNA (uracil(1939)-C(5))-methyltransferase RlmD (443 aa).

Positions 12–70 (SKQLSAKVSLQVTRLDHLGAGIAQHNGKVVFIPGVLPGEKAMVQLTEQKKRYSRAKLLN) constitute a TRAM domain. The [4Fe-4S] cluster site is built by C83, C89, C92, and C171. Positions 277, 306, 311, 327, 354, and 374 each coordinate S-adenosyl-L-methionine. C400 acts as the Nucleophile in catalysis.

Belongs to the class I-like SAM-binding methyltransferase superfamily. RNA M5U methyltransferase family. RlmD subfamily.

The enzyme catalyses uridine(1939) in 23S rRNA + S-adenosyl-L-methionine = 5-methyluridine(1939) in 23S rRNA + S-adenosyl-L-homocysteine + H(+). Its function is as follows. Catalyzes the formation of 5-methyl-uridine at position 1939 (m5U1939) in 23S rRNA. In Shewanella woodyi (strain ATCC 51908 / MS32), this protein is 23S rRNA (uracil(1939)-C(5))-methyltransferase RlmD.